Reading from the N-terminus, the 125-residue chain is Probable prefoldin subunit 6 (125 aa).

Belongs to the prefoldin subunit beta family. Heterohexamer of two PFD-alpha type and four PFD-beta type subunits.

Functionally, binds specifically to cytosolic chaperonin (c-CPN) and transfers target proteins to it. Binds to nascent polypeptide chain and promotes folding in an environment in which there are many competing pathways for nonnative proteins. In Drosophila melanogaster (Fruit fly), this protein is Probable prefoldin subunit 6.